Reading from the N-terminus, the 239-residue chain is Protein GrpE (239 aa).

2 disordered regions span residues 1-53 (MIEE…EDLK) and 210-239 (GPGQQISQESEEKDKVDKDIDSEGSISEEN). Basic and acidic residues-rich tracts occupy residues 34 to 53 (NEDKKLPDDNNEKIDAEDLK) and 219 to 230 (SEEKDKVDKDID).

This sequence belongs to the GrpE family. In terms of assembly, homodimer.

It is found in the cytoplasm. Its function is as follows. Participates actively in the response to hyperosmotic and heat shock by preventing the aggregation of stress-denatured proteins, in association with DnaK and GrpE. It is the nucleotide exchange factor for DnaK and may function as a thermosensor. Unfolded proteins bind initially to DnaJ; upon interaction with the DnaJ-bound protein, DnaK hydrolyzes its bound ATP, resulting in the formation of a stable complex. GrpE releases ADP from DnaK; ATP binding to DnaK triggers the release of the substrate protein, thus completing the reaction cycle. Several rounds of ATP-dependent interactions between DnaJ, DnaK and GrpE are required for fully efficient folding. In Prochlorococcus marinus (strain MIT 9515), this protein is Protein GrpE.